An 85-amino-acid chain; its full sequence is Sec-independent protein translocase protein TatA (85 aa).

The helical transmembrane segment at 7–27 threads the bilayer; the sequence is VFGSLGWTEILLILFIALLLF. Positions 50–85 are disordered; that stretch reads LTGESDDSSQQISQEQERSVPKEETKTSKSKKSKSA. A compositionally biased stretch (basic and acidic residues) spans 64-76; sequence EQERSVPKEETKT.

This sequence belongs to the TatA/E family. As to quaternary structure, forms a complex with TatC.

It is found in the cell inner membrane. Its function is as follows. Part of the twin-arginine translocation (Tat) system that transports large folded proteins containing a characteristic twin-arginine motif in their signal peptide across membranes. TatA could form the protein-conducting channel of the Tat system. The protein is Sec-independent protein translocase protein TatA of Leptospira interrogans serogroup Icterohaemorrhagiae serovar Lai (strain 56601).